Reading from the N-terminus, the 294-residue chain is Acetylglutamate kinase (294 aa).

Residues 63–64 (GG), R85, and N188 each bind substrate.

It belongs to the acetylglutamate kinase family. ArgB subfamily.

It is found in the cytoplasm. It carries out the reaction N-acetyl-L-glutamate + ATP = N-acetyl-L-glutamyl 5-phosphate + ADP. It functions in the pathway amino-acid biosynthesis; L-arginine biosynthesis; N(2)-acetyl-L-ornithine from L-glutamate: step 2/4. Functionally, catalyzes the ATP-dependent phosphorylation of N-acetyl-L-glutamate. This chain is Acetylglutamate kinase, found in Methanococcus maripaludis (strain DSM 14266 / JCM 13030 / NBRC 101832 / S2 / LL).